The chain runs to 122 residues: MSSLAQKQVARLKRQTRVRKKITGSPARPRLNVFKSARHIYAQLIDDTTGATLASASTLLGDVAEGLSYTGNIEAATKVGAAIAKKALEKEITAVVFDRNGFLYHGRIKALADAARENGLSF.

Belongs to the universal ribosomal protein uL18 family. As to quaternary structure, part of the 50S ribosomal subunit; part of the 5S rRNA/L5/L18/L25 subcomplex. Contacts the 5S and 23S rRNAs.

This is one of the proteins that bind and probably mediate the attachment of the 5S RNA into the large ribosomal subunit, where it forms part of the central protuberance. The sequence is that of Large ribosomal subunit protein uL18 from Geobacter sp. (strain M21).